The sequence spans 410 residues: E3 ubiquitin-protein ligase MARCHF4 (410 aa).

An N-terminal signal peptide occupies residues 1–18; sequence MLMPLCGLLWWWWCCCSG. Residues 92-136 form a disordered region; it reads GPREVVGREPPPVPPPPPLPPSSVEDDWGGPATEPPASLLSSASS. The span at 100–112 shows a compositional bias: pro residues; it reads EPPPVPPPPPLPP. Positions 126 to 136 are enriched in low complexity; that stretch reads PPASLLSSASS. The RING-CH-type zinc-finger motif lies at 155–215; that stretch reads DSGMRTPLCR…ELCYYKYHVI (61 aa). C163, C166, C179, C181, H189, C192, C205, and C208 together coordinate Zn(2+). The next 2 membrane-spanning stretches (helical) occupy residues 238-258 and 272-292; these read VAAA…LIWS and LFQI…GLII. 2 disordered regions span residues 324–372 and 390–410; these read EDQK…SGPL and PHEQ…VTTV. Residues 333 to 346 are compositionally biased toward polar residues; the sequence is NPRTSSSTQANIPS. A compositionally biased stretch (low complexity) spans 352–366; it reads AGTPAPEQGPAQAAG.

As to expression, expressed in brain and placenta.

Its subcellular location is the golgi apparatus membrane. The catalysed reaction is S-ubiquitinyl-[E2 ubiquitin-conjugating enzyme]-L-cysteine + [acceptor protein]-L-lysine = [E2 ubiquitin-conjugating enzyme]-L-cysteine + N(6)-ubiquitinyl-[acceptor protein]-L-lysine.. It functions in the pathway protein modification; protein ubiquitination. In terms of biological role, E3 ubiquitin-protein ligase that may mediate ubiquitination of MHC-I and CD4, and promote their subsequent endocytosis and sorting to lysosomes via multivesicular bodies. E3 ubiquitin ligases accept ubiquitin from an E2 ubiquitin-conjugating enzyme in the form of a thioester and then directly transfer the ubiquitin to targeted substrates. In Homo sapiens (Human), this protein is E3 ubiquitin-protein ligase MARCHF4.